The primary structure comprises 125 residues: Ribonuclease P protein component (125 aa).

The protein belongs to the RnpA family. In terms of assembly, consists of a catalytic RNA component (M1 or rnpB) and a protein subunit.

The enzyme catalyses Endonucleolytic cleavage of RNA, removing 5'-extranucleotides from tRNA precursor.. RNaseP catalyzes the removal of the 5'-leader sequence from pre-tRNA to produce the mature 5'-terminus. It can also cleave other RNA substrates such as 4.5S RNA. The protein component plays an auxiliary but essential role in vivo by binding to the 5'-leader sequence and broadening the substrate specificity of the ribozyme. This is Ribonuclease P protein component from Rhodococcus opacus (strain B4).